A 211-amino-acid polypeptide reads, in one-letter code: Pyridoxine/pyridoxamine 5'-phosphate oxidase (211 aa).

Residues Arg-7–Tyr-10 and Lys-65 contribute to the substrate site. FMN contacts are provided by residues Arg-60–Lys-65, Tyr-75–Thr-76, Arg-81, Lys-82, and Gln-104. Substrate contacts are provided by Tyr-122, Arg-126, and Ser-130. Residues Gln-139 to Ser-140 and Trp-184 contribute to the FMN site. Residue Arg-190–His-192 participates in substrate binding. Arg-194 lines the FMN pocket.

The protein belongs to the pyridoxamine 5'-phosphate oxidase family. Homodimer. FMN is required as a cofactor.

It catalyses the reaction pyridoxamine 5'-phosphate + O2 + H2O = pyridoxal 5'-phosphate + H2O2 + NH4(+). The enzyme catalyses pyridoxine 5'-phosphate + O2 = pyridoxal 5'-phosphate + H2O2. It functions in the pathway cofactor metabolism; pyridoxal 5'-phosphate salvage; pyridoxal 5'-phosphate from pyridoxamine 5'-phosphate: step 1/1. It participates in cofactor metabolism; pyridoxal 5'-phosphate salvage; pyridoxal 5'-phosphate from pyridoxine 5'-phosphate: step 1/1. Its function is as follows. Catalyzes the oxidation of either pyridoxine 5'-phosphate (PNP) or pyridoxamine 5'-phosphate (PMP) into pyridoxal 5'-phosphate (PLP). The protein is Pyridoxine/pyridoxamine 5'-phosphate oxidase of Vibrio cholerae serotype O1 (strain ATCC 39541 / Classical Ogawa 395 / O395).